The chain runs to 502 residues: Peroxisomal catalase (502 aa).

Catalysis depends on residues histidine 64 and asparagine 137. Tyrosine 347 lines the heme pocket. Positions alanine 500–methionine 502 match the Microbody targeting signal motif.

It belongs to the catalase family. Heme serves as cofactor.

The protein resides in the peroxisome matrix. It carries out the reaction 2 H2O2 = O2 + 2 H2O. Catalyzes the degradation of hydrogen peroxide (H(2)O(2)) generated by peroxisomal oxidases to water and oxygen, thereby protecting cells from the toxic effects of hydrogen peroxide. This chain is Peroxisomal catalase, found in Toxoplasma gondii.